Consider the following 3066-residue polypeptide: Genome polyprotein (3066 aa).

The 142-residue stretch at 176-317 (LKKAVGSGKV…LDNVYTIEHY (142 aa)) folds into the Peptidase S30 domain. Active-site for P1 proteinase activity residues include His-230, Glu-239, and Ser-271. Positions 370–373 (KLSC) match the Involved in interaction with stylet and aphid transmission motif. An Involved in virions binding and aphid transmission motif is present at residues 626–628 (PTK). The region spanning 652-774 (MYIAKEGYCY…EGEMKHYRVG (123 aa)) is the Peptidase C6 domain. Catalysis depends on for helper component proteinase activity residues Cys-660 and His-733. A Helicase ATP-binding domain is found at 1245 to 1397 (TITLSTSTEF…TQHPVKLKVE (153 aa)). 1258–1265 (GAVGSGKS) contacts ATP. The DECH box signature appears at 1347-1350 (DECH). Positions 1416 to 1575 (DMVQYGHNLL…GLPVTTQGVS (160 aa)) constitute a Helicase C-terminal domain. Residues 1900–1909 (KKGKQKGSTH) carry the Nuclear localization signal motif. O-(5'-phospho-RNA)-tyrosine is present on Tyr-1924. In terms of domain architecture, Peptidase C4 spans 2046–2264 (SKSTYKGLRD…IAWGSLNLVD (219 aa)). Catalysis depends on for nuclear inclusion protein A activity residues His-2091, Asp-2126, and Cys-2196. The region spanning 2530 to 2654 (WVYCHADGSQ…AVQKEDVWLY (125 aa)) is the RdRp catalytic domain. Residues 2797–2839 (EVYESVSTQSSKKEEEKDAGADEREKDKGKGPADKDVGAGSKG) are disordered. The segment covering 2807 to 2833 (SKKEEEKDAGADEREKDKGKGPADKDV) has biased composition (basic and acidic residues). A Phosphothreonine modification is found at Thr-3048.

It belongs to the potyviridae genome polyprotein family. Interacts with host eIF4E protein (via cap-binding region); this interaction mediates the translation of the VPg-viral RNA conjugates. Part of a complex that comprises VPg, RNA, host EIF4E and EIF4G; this interaction mediates the translation of the VPg-viral RNA conjugates. VPg is uridylylated by the polymerase and is covalently attached to the 5'-end of the genomic RNA. This uridylylated form acts as a nucleotide-peptide primer for the polymerase. Post-translationally, genome polyprotein of potyviruses undergoes post-translational proteolytic processing by the main proteinase NIa-pro resulting in the production of at least ten individual proteins. The P1 proteinase and the HC-pro cleave only their respective C-termini autocatalytically. 6K1 is essential for proper proteolytic separation of P3 from CI.

It is found in the host cytoplasmic vesicle. The protein resides in the host nucleus. Its subcellular location is the virion. It carries out the reaction RNA(n) + a ribonucleoside 5'-triphosphate = RNA(n+1) + diphosphate. The enzyme catalyses Hydrolyzes glutaminyl bonds, and activity is further restricted by preferences for the amino acids in P6 - P1' that vary with the species of potyvirus, e.g. Glu-Xaa-Xaa-Tyr-Xaa-Gln-|-(Ser or Gly) for the enzyme from tobacco etch virus. The natural substrate is the viral polyprotein, but other proteins and oligopeptides containing the appropriate consensus sequence are also cleaved.. It catalyses the reaction Hydrolyzes a Gly-|-Gly bond at its own C-terminus, commonly in the sequence -Tyr-Xaa-Val-Gly-|-Gly, in the processing of the potyviral polyprotein.. Functionally, required for aphid transmission and also has proteolytic activity. Only cleaves a Gly-Gly dipeptide at its own C-terminus. Interacts with virions and aphid stylets. Acts as a suppressor of RNA-mediated gene silencing, also known as post-transcriptional gene silencing (PTGS), a mechanism of plant viral defense that limits the accumulation of viral RNAs. May have RNA-binding activity. Its function is as follows. Has helicase activity. It may be involved in replication. In terms of biological role, indispensable for virus replication. Reduces the abundance of host transcripts related to jasmonic acid biosynthesis therefore altering the host defenses. In order to increase its own stability, decreases host protein degradation pathways. Indispensable for virus replication. Functionally, mediates the cap-independent, EIF4E-dependent translation of viral genomic RNAs. Binds to the cap-binding site of host EIF4E and thus interferes with the host EIF4E-dependent mRNA export and translation. VPg-RNA directly binds EIF4E and is a template for transcription. Also forms trimeric complexes with EIF4E-EIF4G, which are templates for translation. Its function is as follows. Has RNA-binding and proteolytic activities. In terms of biological role, an RNA-dependent RNA polymerase that plays an essential role in the virus replication. Involved in aphid transmission, cell-to-cell and systemis movement, encapsidation of the viral RNA and in the regulation of viral RNA amplification. This is Genome polyprotein from Bean common mosaic necrosis virus (strain NL-3) (BCMNV).